Reading from the N-terminus, the 408-residue chain is Peptidase T (408 aa).

His78 contacts Zn(2+). Asp80 is an active-site residue. Asp140 is a Zn(2+) binding site. Residue Glu173 is the Proton acceptor of the active site. Residues Glu174, Asp196, and His379 each coordinate Zn(2+).

It belongs to the peptidase M20B family. The cofactor is Zn(2+).

The protein resides in the cytoplasm. The catalysed reaction is Release of the N-terminal residue from a tripeptide.. Functionally, cleaves the N-terminal amino acid of tripeptides. This is Peptidase T from Escherichia coli O6:K15:H31 (strain 536 / UPEC).